A 432-amino-acid chain; its full sequence is Alkaline protease secretion protein AprE (432 aa).

At 1–14 the chain is on the cytoplasmic side; that stretch reads MTRTVKRDENAYAR. The helical transmembrane segment at 15-36 threads the bilayer; that stretch reads LGWLLVLFGFGGALLWAAFAPL. At 37–432 the chain is on the periplasmic side; it reads DQGVAVPATV…DRAHVALAEN (396 aa).

The protein belongs to the membrane fusion protein (MFP) (TC 8.A.1) family.

Its subcellular location is the cell inner membrane. Functionally, involved in the secretion of alkaline protease. This is Alkaline protease secretion protein AprE (aprE) from Pseudomonas aeruginosa (strain ATCC 15692 / DSM 22644 / CIP 104116 / JCM 14847 / LMG 12228 / 1C / PRS 101 / PAO1).